Here is a 341-residue protein sequence, read N- to C-terminus: Phenylalanine--tRNA ligase alpha subunit (341 aa).

Glu-252 contacts Mg(2+).

Belongs to the class-II aminoacyl-tRNA synthetase family. Phe-tRNA synthetase alpha subunit type 1 subfamily. Tetramer of two alpha and two beta subunits. Mg(2+) serves as cofactor.

The protein resides in the cytoplasm. It carries out the reaction tRNA(Phe) + L-phenylalanine + ATP = L-phenylalanyl-tRNA(Phe) + AMP + diphosphate + H(+). This Malacoplasma penetrans (strain HF-2) (Mycoplasma penetrans) protein is Phenylalanine--tRNA ligase alpha subunit.